Consider the following 506-residue polypeptide: NAD(P)H-quinone oxidoreductase subunit 2 (506 aa).

A run of 13 helical transmembrane segments spans residues 14-34 (AIIP…VDLA), 42-62 (WAPI…ALQW), 79-99 (LAIA…LISW), 108-128 (PIGE…LLCG), 132-152 (LISV…LSGY), 167-187 (LLVG…LYGL), 206-226 (FITS…IAAV), 240-260 (PTPV…AFAI), 276-296 (LLFT…ALAQ), 302-322 (MLAY…VSGT), 330-350 (VLYL…VILF), 374-394 (LGLS…GFFG), and 409-429 (LLVI…ISVI).

The protein belongs to the complex I subunit 2 family. In terms of assembly, NDH-1 can be composed of about 15 different subunits; different subcomplexes with different compositions have been identified which probably have different functions.

It localises to the cellular thylakoid membrane. It catalyses the reaction a plastoquinone + NADH + (n+1) H(+)(in) = a plastoquinol + NAD(+) + n H(+)(out). The enzyme catalyses a plastoquinone + NADPH + (n+1) H(+)(in) = a plastoquinol + NADP(+) + n H(+)(out). NDH-1 shuttles electrons from an unknown electron donor, via FMN and iron-sulfur (Fe-S) centers, to quinones in the respiratory and/or the photosynthetic chain. The immediate electron acceptor for the enzyme in this species is believed to be plastoquinone. Couples the redox reaction to proton translocation, and thus conserves the redox energy in a proton gradient. Cyanobacterial NDH-1 also plays a role in inorganic carbon-concentration. This Prochlorococcus marinus (strain AS9601) protein is NAD(P)H-quinone oxidoreductase subunit 2.